Consider the following 200-residue polypeptide: Large ribosomal subunit protein bL25 (200 aa).

Disordered stretches follow at residues 1–20 (MTIE…ASRR) and 179–200 (PVVA…GEAA).

It belongs to the bacterial ribosomal protein bL25 family. CTC subfamily. As to quaternary structure, part of the 50S ribosomal subunit; part of the 5S rRNA/L5/L18/L25 subcomplex. Contacts the 5S rRNA. Binds to the 5S rRNA independently of L5 and L18.

Its function is as follows. This is one of the proteins that binds to the 5S RNA in the ribosome where it forms part of the central protuberance. This chain is Large ribosomal subunit protein bL25, found in Azoarcus sp. (strain BH72).